Consider the following 267-residue polypeptide: Tryptophan synthase alpha chain (267 aa).

Active-site proton acceptor residues include Glu-43 and Asp-54.

It belongs to the TrpA family. As to quaternary structure, tetramer of two alpha and two beta chains.

It catalyses the reaction (1S,2R)-1-C-(indol-3-yl)glycerol 3-phosphate + L-serine = D-glyceraldehyde 3-phosphate + L-tryptophan + H2O. It functions in the pathway amino-acid biosynthesis; L-tryptophan biosynthesis; L-tryptophan from chorismate: step 5/5. The alpha subunit is responsible for the aldol cleavage of indoleglycerol phosphate to indole and glyceraldehyde 3-phosphate. The chain is Tryptophan synthase alpha chain from Bacillus subtilis subsp. natto.